We begin with the raw amino-acid sequence, 663 residues long: Sodium/potassium/calcium exchanger 1 (663 aa).

The Extracellular portion of the chain corresponds to 32–128 (SPSAIPALLT…DLFSVEERRQ (97 aa)). N-linked (GlcNAc...) asparagine glycans are attached at residues Asn59, Asn66, and Asn100. Residues 129-149 (GWVVLHIFGMMYVFVALAIVC) traverse the membrane as a helical segment. The Cytoplasmic portion of the chain corresponds to 150 to 173 (DEYFVPALGVITEKLQISEDVAGA). The stretch at 170 to 210 (VAGATFMAAGGSAPELFTSLIGVFISHSNVGIGTIVGSAVF) is one Alpha-1 repeat. A helical membrane pass occupies residues 174 to 194 (TFMAAGGSAPELFTSLIGVFI). Over 195-200 (SHSNVG) the chain is Extracellular. The chain crosses the membrane as a helical span at residues 201-221 (IGTIVGSAVFNILFVIGTCAL). Residues 222–228 (FSREILH) are Cytoplasmic-facing. The helical transmembrane segment at 229-253 (LTWWPLFRDISFYIVDLLMLILFFL) threads the bilayer. Residues 254 to 259 (DSVIDW) lie on the Extracellular side of the membrane. A helical membrane pass occupies residues 260–276 (WESLLLLTAYATYVFTM). The Cytoplasmic segment spans residues 277 to 471 (KHNVSLEQWV…SLEWPETRKK (195 aa)). 2 disordered regions span residues 308–343 (KSSVAVAEDGTKPADGKKLQPTTALQRGTSSASLHN) and 384–465 (LTGQ…SLEW). The span at 316–325 (DGTKPADGKK) shows a compositional bias: basic and acidic residues. Composition is skewed to polar residues over residues 327–343 (QPTTALQRGTSSASLHN) and 399–412 (ASQNTVQVTPASDS). A Phosphoserine modification is found at Ser337. Basic and acidic residues predominate over residues 413 to 423 (EPSKDKQKEDT). The span at 434 to 461 (DNSEDSSSDSEDDSDDDSTDDEENDEPL) shows a compositional bias: acidic residues. Residues 472 to 492 (QAIYLFLFPIVFPLWSTIPDV) form a helical membrane-spanning segment. Over 493–499 (RNPDSKK) the chain is Extracellular. The chain crosses the membrane as a helical span at residues 500 to 520 (FFVITFFGSIIWIAAFSYLMV). Residues 521-535 (WWAHQVGETIGISEE) are Cytoplasmic-facing. The chain crosses the membrane as a helical span at residues 536–556 (IMGLTILAAGTSIPDLITSVI). One copy of the Alpha-2 repeat lies at 543-574 (AAGTSIPDLITSVIVARKGLGDMAVSSSVGSN). The Extracellular portion of the chain corresponds to 557 to 574 (VARKGLGDMAVSSSVGSN). Residues 575–595 (IFDITVGLPVPWFLYSVFNGF) form a helical membrane-spanning segment. At 596-604 (SPVAVSSNG) the chain is on the cytoplasmic side. Residues 605–625 (LFCAIVLLFLMLLFVIISIAL) traverse the membrane as a helical segment. Over 626 to 632 (CKWKMNK) the chain is Extracellular. A helical membrane pass occupies residues 633–653 (ILGVTMFALYFVFLIISVMLE). Over 654–663 (DRIISCPVSV) the chain is Cytoplasmic.

Belongs to the Ca(2+):cation antiporter (CaCA) (TC 2.A.19) family. SLC24A subfamily. In terms of processing, the uncleaved signal sequence is required for efficient membrane targeting and proper membrane integration and topology. Retinal rods. Localizes to the inner segment of rod photoreceptors.

It localises to the cell membrane. It catalyses the reaction Ca(2+)(out) + K(+)(out) + 4 Na(+)(in) = Ca(2+)(in) + K(+)(in) + 4 Na(+)(out). Functionally, calcium, potassium:sodium antiporter that transports 1 Ca(2+) and 1 K(+) in exchange for 4 Na(+). Critical component of the visual transduction cascade, controlling the calcium concentration of outer segments during light and darkness. Light causes a rapid lowering of cytosolic free calcium in the outer segment of both retinal rod and cone photoreceptors and the light-induced lowering of calcium is caused by extrusion via this protein which plays a key role in the process of light adaptation. The protein is Sodium/potassium/calcium exchanger 1 (SLC24A1) of Gallus gallus (Chicken).